The sequence spans 571 residues: Adenine deaminase (571 aa).

This sequence belongs to the metallo-dependent hydrolases superfamily. Adenine deaminase family. It depends on Mn(2+) as a cofactor.

The enzyme catalyses adenine + H2O + H(+) = hypoxanthine + NH4(+). This Dehalococcoides mccartyi (strain ATCC BAA-2266 / KCTC 15142 / 195) (Dehalococcoides ethenogenes (strain 195)) protein is Adenine deaminase.